Consider the following 164-residue polypeptide: Interferon gamma (164 aa).

The first 19 residues, 1–19 (MTCQTYNLFVLSVIMIYYG), serve as a signal peptide directing secretion. N-linked (GlcNAc...) asparagine glycans are attached at residues Asn-42 and Asn-61.

It belongs to the type II (or gamma) interferon family. As to quaternary structure, homodimer.

It localises to the secreted. In terms of biological role, produced by lymphocytes activated by specific antigens or mitogens. IFN-gamma, in addition to having antiviral activity, has important immunoregulatory functions. It is a potent activator of macrophages, it has antiproliferative effects on transformed cells and it can potentiate the antiviral and antitumor effects of the type I interferons. This Meleagris gallopavo (Wild turkey) protein is Interferon gamma (IFNG).